Here is a 1086-residue protein sequence, read N- to C-terminus: Receptor-type guanylate cyclase gcy-6 (1086 aa).

Residues 1-21 (MIGVYLRSVIFPLLFVIQTIC) form the signal peptide. Residues 22–487 (QPPGNVFHLG…PANVFFQYIG (466 aa)) are Extracellular-facing. N-linked (GlcNAc...) asparagine glycans are attached at residues N325, N343, N387, and N427. The helical transmembrane segment at 488 to 508 (WFIAAIIIIFFTIMGAILAFI) threads the bilayer. At 509-1086 (YLCHAKQQEV…APKILKKKQD (578 aa)) the chain is on the cytoplasmic side. Residues 560–836 (SSTLSEVGET…NDNLMDHVFN (277 aa)) enclose the Protein kinase domain. ATP is bound by residues 566–574 (VGETRNYLF) and K589. One can recognise a Guanylate cyclase domain in the interval 894-1024 (TLFFSDVVSF…DAVNTASRME (131 aa)).

This sequence belongs to the adenylyl cyclase class-4/guanylyl cyclase family. In terms of tissue distribution, expressed in both ASEL and ASER neurons throughout late embryonic and early larval stages. In adults, expressed asymmetrically in ASE left (ASEL) sensory neuron.

It localises to the cell membrane. It catalyses the reaction GTP = 3',5'-cyclic GMP + diphosphate. Its function is as follows. Guanylate cyclase involved in the production of the second messenger cGMP. Regulates chemotaxis responses toward the salt ion Mg(2+) and to a lesser extent toward Cl(1-) in ASE left (ASEL) sensory neuron. This chain is Receptor-type guanylate cyclase gcy-6, found in Caenorhabditis elegans.